Reading from the N-terminus, the 325-residue chain is NADH-quinone oxidoreductase subunit H (325 aa).

The next 8 membrane-spanning stretches (helical) occupy residues 11–31 (ILLT…CGAF), 81–101 (VIFT…FAIV), 114–134 (IGIL…LFAG), 154–174 (LSYE…AGSF), 186–206 (VWNV…GVAV), 237–257 (FFVG…TLFF), 265–285 (LPPF…FILI), and 304–324 (ICLP…LWQA).

The protein belongs to the complex I subunit 1 family. In terms of assembly, NDH-1 is composed of 13 different subunits. Subunits NuoA, H, J, K, L, M, N constitute the membrane sector of the complex.

Its subcellular location is the cell inner membrane. The catalysed reaction is a quinone + NADH + 5 H(+)(in) = a quinol + NAD(+) + 4 H(+)(out). In terms of biological role, NDH-1 shuttles electrons from NADH, via FMN and iron-sulfur (Fe-S) centers, to quinones in the respiratory chain. The immediate electron acceptor for the enzyme in this species is believed to be ubiquinone. Couples the redox reaction to proton translocation (for every two electrons transferred, four hydrogen ions are translocated across the cytoplasmic membrane), and thus conserves the redox energy in a proton gradient. This subunit may bind ubiquinone. The polypeptide is NADH-quinone oxidoreductase subunit H (Escherichia coli O45:K1 (strain S88 / ExPEC)).